The chain runs to 142 residues: Gonadotropin subunit beta-2 (142 aa).

The first 24 residues, M1–G24, serve as a signal peptide directing secretion. 6 cysteine pairs are disulfide-bonded: C30–C78, C44–C93, C47–C131, C55–C109, C59–C111, and C114–C121. N34 carries an N-linked (GlcNAc...) asparagine glycan.

It belongs to the glycoprotein hormones subunit beta family. As to quaternary structure, heterodimer of an alpha and a beta chain.

It localises to the secreted. Involved in gametogenesis and steroidogenesis. The sequence is that of Gonadotropin subunit beta-2 (cgbb) from Coregonus autumnalis (Arctic cisco).